Reading from the N-terminus, the 304-residue chain is Putative S-adenosyl-L-methionine-dependent methyltransferase MAP_4189c (304 aa).

S-adenosyl-L-methionine contacts are provided by residues Asp130 and 159-160 (DL).

This sequence belongs to the UPF0677 family.

Its function is as follows. Exhibits S-adenosyl-L-methionine-dependent methyltransferase activity. The sequence is that of Putative S-adenosyl-L-methionine-dependent methyltransferase MAP_4189c from Mycolicibacterium paratuberculosis (strain ATCC BAA-968 / K-10) (Mycobacterium paratuberculosis).